The primary structure comprises 280 residues: SPX domain-containing protein 2 (280 aa).

Residues 1–162 (MKFGKSLSSQ…GSMIRLPFVQ (162 aa)) form the SPX domain. 2 disordered regions span residues 191–244 (PTNE…KSTV) and 257–280 (GSST…EPGR).

Interacts (via SPX domain) with PHR2 (via C-terminus). Interacts with RLI1 in the nucleus to prevents its positive regulation of leaf inclination during phosphate (Pi) starvation. Predominantly expressed in roots, leaves and seeds. Localized in leaves lamina joints.

The protein resides in the nucleus. Inhibits PHR2 DNA-binding activity via a phosphate (Pi)-dependent protein interaction. Together with SPX1, plays a negative role in the regulation of leaf inclination by preventing RLI1 transcription factor activity in Pi depleted conditions. The protein is SPX domain-containing protein 2 of Oryza sativa subsp. japonica (Rice).